We begin with the raw amino-acid sequence, 245 residues long: Eukaryotic translation initiation factor 3 subunit K (245 aa).

Positions 46–227 constitute a PCI domain; sequence YDCYANLALL…EAKGTVVREN (182 aa).

This sequence belongs to the eIF-3 subunit K family. In terms of assembly, component of the eukaryotic translation initiation factor 3 (eIF-3) complex.

It localises to the cytoplasm. Functionally, component of the eukaryotic translation initiation factor 3 (eIF-3) complex, which is involved in protein synthesis of a specialized repertoire of mRNAs and, together with other initiation factors, stimulates binding of mRNA and methionyl-tRNAi to the 40S ribosome. The eIF-3 complex specifically targets and initiates translation of a subset of mRNAs involved in cell proliferation. The protein is Eukaryotic translation initiation factor 3 subunit K of Sclerotinia sclerotiorum (strain ATCC 18683 / 1980 / Ss-1) (White mold).